Here is an 89-residue protein sequence, read N- to C-terminus: Small ribosomal subunit protein uS15 (89 aa).

Belongs to the universal ribosomal protein uS15 family. In terms of assembly, part of the 30S ribosomal subunit. Forms a bridge to the 50S subunit in the 70S ribosome, contacting the 23S rRNA.

Functionally, one of the primary rRNA binding proteins, it binds directly to 16S rRNA where it helps nucleate assembly of the platform of the 30S subunit by binding and bridging several RNA helices of the 16S rRNA. Forms an intersubunit bridge (bridge B4) with the 23S rRNA of the 50S subunit in the ribosome. The protein is Small ribosomal subunit protein uS15 of Gluconacetobacter diazotrophicus (strain ATCC 49037 / DSM 5601 / CCUG 37298 / CIP 103539 / LMG 7603 / PAl5).